The following is a 1051-amino-acid chain: MTLKEQSSTIDRLSKENFDLKMRIHFLNEALNRRSEEGIKEMISENVELKSDKLKLQKDNQGLKRKIRDLEKQLKDQQSDKESMLNHDPEGGSDEEDRDHAQDEELLFLRERVETYELEIERLRSESIARESEKRRLAEMLKSLNDGRPTGSDSGAREERDMWKDMLDAETAAREQADEENKRLREELMRVRSEATYAIAPAAPLRSGHRNRGDSLVSHSAVSDRELYRNTAAGSSSSSTLVMEFELLKQENAELRREVSAQTSMLTSRNREKERLYQEIEELKLGQRRDRSIAGDSILDRSASRAQGRPSSSISDRTGQSPIDDAEREDWELRNGQLRDQVSALKLENQAIRQELEELDKAYSADVEQAEEDIQTLQQERDQAMQVAEERDAAFQELRAEAQEELDALGDELDQKIEECQRLTEDLRTQDDNLRALQAEMRSASEGIIRLEEDAQNNLQRYKAVQQELEQCNEEMESLEKSLYEANSKVQRLTVQIESSQNEIAFLREEQDGDKIKIGDLESELKTYRMSLQSEKDKTKELEGRLAEERYQREVVGSKEKQEVQRIMNELNREVSAAKEECRKLKKNLSAQEIETNTWKERLTDLENNLRETLGDLTGSRSSLIANIMKLQKELESTALELESTRSTLDEKETLLRNRDALLESHGLESRKLSELLERERQARRADKQSFEQALKSHHQASRTITQNNSRILELENARNQDRKRFTSLEQQFREQLNERNSMLLTIWKRLSGMCGPDWAHSNSLINGNLPSQEVIGNILFWPGFSRNLLLAVKTLENVISSFKTRVKDVERNLTKQYQTLEHAFSLRIKKLDRLEETTMNMRAQLQTRNQTGLSPELSKLRGENRLLKAELNLLQNHPRSRSTTAGVAGSPQSSTIDLAERGSLVRANTAAESPARSSIPQPAQMTNLAEPTGAVTRPRQFKPSDNHGNQEVWIKRLHELERRLKAEREARLLDRNGARRRLEERDAENKRLRAQLDRQRLRQGVSTETSTDDGGHGPPSEPTTGDEGYREREEEHSSSEGEGITVDIEV.

Coiled coils occupy residues Ile-10–Ala-200 and Ser-239–Leu-285. Residues Lys-58–Glu-90 are compositionally biased toward basic and acidic residues. 2 disordered regions span residues Lys-58–His-100 and Leu-141–Arg-160. Basic and acidic residues predominate over residues Ala-294–Ala-303. Disordered stretches follow at residues Ala-294–Glu-329, Asn-877–Arg-902, Asn-909–Asn-928, and Glu-984–Val-1051. A compositionally biased stretch (polar residues) spans Arg-309–Ser-321. Coiled coils occupy residues Asp-325–Met-743 and Arg-787–His-878. Polar residues-rich tracts occupy residues Asn-877–Ile-897 and Ala-916–Asn-928. Residues Asn-950 to Gln-1004 adopt a coiled-coil conformation. Composition is skewed to basic and acidic residues over residues Glu-984 to Arg-1001 and Glu-1028 to Ser-1040.

The protein localises to the cytoplasm. Its function is as follows. Involved in regulation of nuclear migration. May be involved in regulating nuclear positioning. The chain is Anucleate primary sterigmata protein B (apsB) from Emericella nidulans (strain FGSC A4 / ATCC 38163 / CBS 112.46 / NRRL 194 / M139) (Aspergillus nidulans).